The chain runs to 219 residues: Ribose-5-phosphate isomerase A (219 aa).

Substrate contacts are provided by residues 28–31, 81–84, and 94–97; these read SGST, DGAD, and KGGG. Glutamate 103 (proton acceptor) is an active-site residue. Residue lysine 121 coordinates substrate.

This sequence belongs to the ribose 5-phosphate isomerase family. In terms of assembly, homodimer.

It catalyses the reaction aldehydo-D-ribose 5-phosphate = D-ribulose 5-phosphate. It functions in the pathway carbohydrate degradation; pentose phosphate pathway; D-ribose 5-phosphate from D-ribulose 5-phosphate (non-oxidative stage): step 1/1. In terms of biological role, catalyzes the reversible conversion of ribose-5-phosphate to ribulose 5-phosphate. This chain is Ribose-5-phosphate isomerase A, found in Histophilus somni (strain 129Pt) (Haemophilus somnus).